The chain runs to 914 residues: Chitin synthase B (914 aa).

2 disordered regions span residues 1-67 (MAYQ…TSGY) and 112-140 (YARS…GGGL). Positions 130-140 (GGAGSGGGGGL) are enriched in gly residues. A run of 7 helical transmembrane segments spans residues 543–562 (WLNG…GRMY), 586–606 (ILTW…MDLV), 627–647 (IVNT…FILA), 662–682 (SFVV…YLVV), 712–732 (AGII…ASFM), 843–863 (LVTF…SDGV), and 882–902 (ALLW…CWFL).

Belongs to the chitin synthase family. Class III subfamily.

It is found in the cell membrane. The enzyme catalyses [(1-&gt;4)-N-acetyl-beta-D-glucosaminyl](n) + UDP-N-acetyl-alpha-D-glucosamine = [(1-&gt;4)-N-acetyl-beta-D-glucosaminyl](n+1) + UDP + H(+). In terms of biological role, polymerizes chitin, a structural polymer of the cell wall and septum, by transferring the sugar moiety of UDP-GlcNAc to the non-reducing end of the growing chitin polymer. Plays an important role in septal growth or maintenance. Mediates colony spore formation. In Aspergillus niger (strain ATCC MYA-4892 / CBS 513.88 / FGSC A1513), this protein is Chitin synthase B.